The chain runs to 613 residues: pH-response transcription factor pacC/RIM101 (613 aa).

Positions Met-1–Asp-61 are disordered. Low complexity predominate over residues Gln-11–Ser-60. 3 C2H2-type zinc fingers span residues Leu-64–His-89, Leu-100–His-124, and His-130–His-152. Residues Lys-146–Val-157 are compositionally biased toward basic and acidic residues. Disordered regions lie at residues Lys-146 to Thr-186, Asn-371 to Gly-391, Ala-406 to Glu-535, and Glu-565 to Ala-613. The span at Pro-417 to Ser-441 shows a compositional bias: low complexity. Composition is skewed to polar residues over residues Arg-442–Ala-460 and Ser-506–Ala-517. A YPX[LI] motif 1 motif is present at residues Tyr-451 to Leu-454. Residues Tyr-605–Leu-608 carry the YPX[LI] motif 2 motif.

This sequence belongs to the pacC/RIM101 family. In terms of assembly, binds to DNA. Post-translationally, activated by C-terminal proteolytic cleavage by signaling protease (probably palB/RIM13) at neutral to alkaline ambient pH.

The protein resides in the cytoplasm. It localises to the nucleus. Its function is as follows. Transcription factor that mediates regulation of both acid- and alkaline-expressed genes in response to ambient pH. At alkaline ambient pH, activates transcription of alkaline-expressed genes (including PAC1 itself) and represses transcription of acid-expressed genes. The protein is pH-response transcription factor pacC/RIM101 (PAC1) of Gibberella moniliformis (Maize ear and stalk rot fungus).